The primary structure comprises 315 residues: Shiga toxin subunit A (315 aa).

The signal sequence occupies residues 1–22 (MKIIIFRVLTFFFVIFSVNVVA). An A1 region spans residues 23 to 273 (KEFTLDFSTA…CHHHASRVAR (251 aa)). Residue Glu-189 is part of the active site. An intrachain disulfide couples Cys-264 to Cys-283. The tract at residues 274-315 (MASDEFPSMCPADGRVRGITHNKILWDSSTLGAILMRRTISS) is A2.

The protein belongs to the ribosome-inactivating protein family. In terms of assembly, shiga toxin contains a single subunit A and five copies of subunit B.

The enzyme catalyses Endohydrolysis of the N-glycosidic bond at one specific adenosine on the 28S rRNA.. Functionally, the A subunit is responsible for inhibiting protein synthesis through the catalytic inactivation of 60S ribosomal subunits. After endocytosis, the A subunit is cleaved by furin in two fragments, A1 and A2: A1 is the catalytically active fragment, and A2 is essential for holotoxin assembly with the B subunits. The sequence is that of Shiga toxin subunit A (stxA) from Shigella sonnei (Shigella sonnei bacteriophage 7888).